Consider the following 188-residue polypeptide: Probable thiol:disulfide interchange protein DsbE-2 (188 aa).

The Cytoplasmic segment spans residues 1–11 (MSMLHQQKRKN). The helical transmembrane segment at 12–32 (HFVFLPLVILLAVCALLFIGL) threads the bilayer. Over 33-188 (QQDPQKIASA…KLEAENAKVR (156 aa)) the chain is Periplasmic. Residues 42 to 179 (ALIGKPVPTF…QEMFIPEWQK (138 aa)) form the Thioredoxin domain. Cys-82 and Cys-85 are disulfide-bonded.

It belongs to the thioredoxin family. DsbE subfamily.

It localises to the cell inner membrane. Its function is as follows. Could be involved in disulfide bond formation. Could catalyzes a late, reductive step in the assembly of periplasmic NrfA c-type cytochrome, probably the reduction of disulfide bonds of the apocytochrome c to allow covalent linkage with the heme. Possible subunit of a heme lyase. The sequence is that of Probable thiol:disulfide interchange protein DsbE-2 (nrfX) from Pasteurella multocida (strain Pm70).